We begin with the raw amino-acid sequence, 132 residues long: Large ribosomal subunit protein bL12 (132 aa).

This sequence belongs to the bacterial ribosomal protein bL12 family. In terms of assembly, homodimer. Part of the ribosomal stalk of the 50S ribosomal subunit. Forms a multimeric L10(L12)X complex, where L10 forms an elongated spine to which 2 to 4 L12 dimers bind in a sequential fashion. Binds GTP-bound translation factors.

Forms part of the ribosomal stalk which helps the ribosome interact with GTP-bound translation factors. Is thus essential for accurate translation. This Ehrlichia canis (strain Jake) protein is Large ribosomal subunit protein bL12.